A 304-amino-acid polypeptide reads, in one-letter code: MQNFGKVAVLMGGFSSEREISLDSGTAILNALKSKGIDAYAFDPKETPLSELKAQGFQTAFNILHGTYGEDGAVQGALELLGIPYTGSGVAASAIGMDKYRCKLIWQALGLPVPEFAVLHDDTDFDAVEEKLGLPMFVKPAAEGSSVGVVKVKGKGRLKSVYEELKHLQGEIIAERFIGGGEYSCPVLNGKGLPGIHIIPATEFYDYEAKYNRNDTIYQCPSEDLTEAEESLMRELAVRGAQAIGAESCVRVDFLKDTDGKLYLLEINTLPGMTSHSLVPKSAAVTGVGFADLCIEILKTAHVG.

In terms of domain architecture, ATP-grasp spans 103 to 299; sequence KLIWQALGLP…FADLCIEILK (197 aa). 129-184 serves as a coordination point for ATP; sequence EEKLGLPMFVKPAAEGSSVGVVKVKGKGRLKSVYEELKHLQGEIIAERFIGGGEYS. Residues D253, E266, and N268 each coordinate Mg(2+).

It belongs to the D-alanine--D-alanine ligase family. Requires Mg(2+) as cofactor. Mn(2+) serves as cofactor.

It is found in the cytoplasm. It catalyses the reaction 2 D-alanine + ATP = D-alanyl-D-alanine + ADP + phosphate + H(+). Its pathway is cell wall biogenesis; peptidoglycan biosynthesis. Functionally, cell wall formation. This is D-alanine--D-alanine ligase from Neisseria meningitidis serogroup C / serotype 2a (strain ATCC 700532 / DSM 15464 / FAM18).